Reading from the N-terminus, the 647-residue chain is Phosphomethylpyrimidine synthase (647 aa).

Substrate is bound by residues Asn-235, Met-264, Tyr-293, His-329, 349–351 (SRG), 390–393 (DGLR), and Glu-429. His-433 serves as a coordination point for Zn(2+). Tyr-456 provides a ligand contact to substrate. His-497 contributes to the Zn(2+) binding site. Residues Cys-577, Cys-580, and Cys-585 each contribute to the [4Fe-4S] cluster site. A disordered region spans residues 623–647 (KSAEFKASGSELYHPAVSHEEVAEG).

This sequence belongs to the ThiC family. As to quaternary structure, homodimer. [4Fe-4S] cluster serves as cofactor.

It carries out the reaction 5-amino-1-(5-phospho-beta-D-ribosyl)imidazole + S-adenosyl-L-methionine = 4-amino-2-methyl-5-(phosphooxymethyl)pyrimidine + CO + 5'-deoxyadenosine + formate + L-methionine + 3 H(+). It functions in the pathway cofactor biosynthesis; thiamine diphosphate biosynthesis. Functionally, catalyzes the synthesis of the hydroxymethylpyrimidine phosphate (HMP-P) moiety of thiamine from aminoimidazole ribotide (AIR) in a radical S-adenosyl-L-methionine (SAM)-dependent reaction. This Vibrio vulnificus (strain CMCP6) protein is Phosphomethylpyrimidine synthase.